The following is a 131-amino-acid chain: Small ribosomal subunit protein uS8 (131 aa).

The protein belongs to the universal ribosomal protein uS8 family. In terms of assembly, part of the 30S ribosomal subunit. Contacts proteins S5 and S12.

In terms of biological role, one of the primary rRNA binding proteins, it binds directly to 16S rRNA central domain where it helps coordinate assembly of the platform of the 30S subunit. This is Small ribosomal subunit protein uS8 from Nitrosomonas europaea (strain ATCC 19718 / CIP 103999 / KCTC 2705 / NBRC 14298).